Consider the following 252-residue polypeptide: Probable transcriptional regulatory protein Caur_1043 (252 aa).

Basic residues predominate over residues 1 to 14 (MSGHSKWHTIRRTK). The segment at 1–22 (MSGHSKWHTIRRTKGVNDQRRG) is disordered.

The protein belongs to the TACO1 family.

It localises to the cytoplasm. The sequence is that of Probable transcriptional regulatory protein Caur_1043 from Chloroflexus aurantiacus (strain ATCC 29366 / DSM 635 / J-10-fl).